A 41-amino-acid polypeptide reads, in one-letter code: uncharacterized protein (41 aa).

A helical membrane pass occupies residues 10–32; sequence LIILAVPFMIKTSLKTNLIFFFL.

It is found in the cell inner membrane. This is an uncharacterized protein from Escherichia coli (strain K12).